A 333-amino-acid chain; its full sequence is tRNA dimethylallyltransferase (333 aa).

23 to 30 (GPTGAGKT) contacts ATP. A substrate-binding site is contributed by 25–30 (TGAGKT). 2 interaction with substrate tRNA regions span residues 53–56 (DSAL) and 177–181 (QRVQR).

It belongs to the IPP transferase family. As to quaternary structure, monomer. Mg(2+) is required as a cofactor.

The catalysed reaction is adenosine(37) in tRNA + dimethylallyl diphosphate = N(6)-dimethylallyladenosine(37) in tRNA + diphosphate. In terms of biological role, catalyzes the transfer of a dimethylallyl group onto the adenine at position 37 in tRNAs that read codons beginning with uridine, leading to the formation of N6-(dimethylallyl)adenosine (i(6)A). The polypeptide is tRNA dimethylallyltransferase (Polynucleobacter asymbioticus (strain DSM 18221 / CIP 109841 / QLW-P1DMWA-1) (Polynucleobacter necessarius subsp. asymbioticus)).